The primary structure comprises 390 residues: MRALNDSYDVVVVGAGPAGSMASYNASKNGAKTLLIEKSQEIGTPVRCAEAVPRIEEFGINPDPSFIKSYIKGGYLIAPNGKKVVVKGGKTDGYVVERKVFDKYLAIRSGQAGTQIAVKSRVTGIEKTDDGYNVFVNYLGDEYVVKSKIVIAADGVESNIAEYAGLKSKKNPKEICSCAEYEMTNVQLLDNEMMEFYFGDICPKGYIWLFPKGDTVNVGIGVIDSKKRAIDYLDEFLSNPLVEGRLDNAVPVEFKVGGDPVGGPIEKTVDDNIIVVGDAAGHVSPLTGGGIGLSMDCGLMAGEVAAQSIKAENYSEEFLSLYEKRWKEKYYKPLMKDLKYKNILQKLSDDELNAIADSIPENLEEVDVGKLAVKIVAKAPSLLRYFKELL.

The FAD site is built by Ala-18, Glu-37, Cys-48, Ala-49, Ala-51, Arg-98, Val-122, Asp-278, Gly-290, and Ile-291. Val-368 contacts a 2,3-bis-O-(geranylgeranyl)-sn-glycerol 1-phospholipid.

Belongs to the geranylgeranyl reductase family. DGGGPL reductase subfamily. It depends on FAD as a cofactor.

It catalyses the reaction a 2,3-bis-O-phytanyl-sn-glycerol 1-phospholipid + 8 A = a 2,3-bis-O-(geranylgeranyl)-sn-glycerol 1-phospholipid + 8 AH2. It carries out the reaction 2,3-bis-O-(phytanyl)-sn-glycerol 1-phosphate + 8 A = 2,3-bis-O-(geranylgeranyl)-sn-glycerol 1-phosphate + 8 AH2. The enzyme catalyses CDP-2,3-bis-O-(geranylgeranyl)-sn-glycerol + 8 AH2 = CDP-2,3-bis-O-(phytanyl)-sn-glycerol + 8 A. The catalysed reaction is archaetidylserine + 8 AH2 = 2,3-bis-O-phytanyl-sn-glycero-3-phospho-L-serine + 8 A. It functions in the pathway membrane lipid metabolism; glycerophospholipid metabolism. In terms of biological role, is involved in the reduction of 2,3-digeranylgeranylglycerophospholipids (unsaturated archaeols) into 2,3-diphytanylglycerophospholipids (saturated archaeols) in the biosynthesis of archaeal membrane lipids. Catalyzes the formation of archaetidic acid (2,3-di-O-phytanyl-sn-glyceryl phosphate) from 2,3-di-O-geranylgeranylglyceryl phosphate (DGGGP) via the hydrogenation of each double bond of the isoprenoid chains. Is also probably able to reduce double bonds of geranyl groups in CDP-2,3-bis-O-(geranylgeranyl)-sn-glycerol and archaetidylserine, thus acting at various stages in the biosynthesis of archaeal membrane lipids. The protein is Digeranylgeranylglycerophospholipid reductase of Methanococcus maripaludis (strain C7 / ATCC BAA-1331).